A 237-amino-acid chain; its full sequence is Phosphoribosylaminoimidazole-succinocarboxamide synthase (237 aa).

It belongs to the SAICAR synthetase family.

It carries out the reaction 5-amino-1-(5-phospho-D-ribosyl)imidazole-4-carboxylate + L-aspartate + ATP = (2S)-2-[5-amino-1-(5-phospho-beta-D-ribosyl)imidazole-4-carboxamido]succinate + ADP + phosphate + 2 H(+). The protein operates within purine metabolism; IMP biosynthesis via de novo pathway; 5-amino-1-(5-phospho-D-ribosyl)imidazole-4-carboxamide from 5-amino-1-(5-phospho-D-ribosyl)imidazole-4-carboxylate: step 1/2. The protein is Phosphoribosylaminoimidazole-succinocarboxamide synthase of Shigella dysenteriae serotype 1 (strain Sd197).